The primary structure comprises 75 residues: Defensin J1-1 (75 aa).

The signal sequence occupies residues 1–27 (MAGFSKVVATIFLMMLLVFATDMMAEA). 4 cysteine pairs are disulfide-bonded: Cys30–Cys74, Cys41–Cys61, Cys47–Cys68, and Cys51–Cys70.

This sequence belongs to the DEFL family. Monomer. Expressed in orange and red ripe fruit and to a lesser extent in mature, green fruit. Present in trace in young, green fruit.

It is found in the secreted. Plant defense peptide with antifungal activity against F.oxysporum and B.cinerea. In Capsicum annuum (Capsicum pepper), this protein is Defensin J1-1.